Here is a 634-residue protein sequence, read N- to C-terminus: Probable sulfate transporter 3.5 (634 aa).

Positions 1 to 12 (MENTITSSTSSP) are enriched in polar residues. The interval 1-25 (MENTITSSTSSPKGRGVNFSTPRGF) is disordered. Over 1 to 81 (MENTITSSTS…KYDMQKLKYD (81 aa)) the chain is Cytoplasmic. The chain crosses the membrane as a helical span at residues 82-102 (VLAGITITSLAVPQGISYAKL). The Extracellular segment spans residues 103 to 104 (AS). A helical membrane pass occupies residues 105 to 125 (IPPIIGLYSSFVPPFVYAVFG). The Cytoplasmic portion of the chain corresponds to 126 to 130 (SSNNL). Residues 131–151 (AVGTVAACSLLIAETFGEEMI) traverse the membrane as a helical segment. Over 152–158 (KNEPELY) the chain is Extracellular. A helical transmembrane segment spans residues 159–179 (LHLIFTATLITGLFQFAMGFL). Residues 180 to 195 (RLGILVDFLSHSTITG) are Cytoplasmic-facing. The helical transmembrane segment at 196 to 216 (FMGGTAIIILLQQLKGIFGLV) threads the bilayer. Residues 217–239 (HFTHKTDVVSVLHSILDNRAEWK) lie on the Extracellular side of the membrane. A helical membrane pass occupies residues 240–260 (WQSTLAGVCFLVFLQSTRYIK). The Cytoplasmic segment spans residues 261–265 (QRYPK). A helical membrane pass occupies residues 266–286 (LFWVSAMGPMVVVVVGCVVAY). The Extracellular segment spans residues 287 to 321 (LVKGTAHGIATVGPLKKGLNPPSIQLLNFDSKYLG). The helical transmembrane segment at 322-342 (MVFKAGIVTGLIALAEGIAIG) threads the bilayer. Residues 343–358 (RSFAVMKNEQTDGNKE) lie on the Cytoplasmic side of the membrane. A helical transmembrane segment spans residues 359 to 379 (MIAFGLMNVIGSFTSCYLTTG). Topologically, residues 380 to 395 (PFSKTAVNYNAGTKTP) are extracellular. Residues 396–416 (MSNVVMGVCMMLVLLFLAPLF) traverse the membrane as a helical segment. The Cytoplasmic portion of the chain corresponds to 417 to 420 (SYTP). The helical transmembrane segment at 421–441 (LVGLSAIIMSAMLGLINYEEM) threads the bilayer. Topologically, residues 442–458 (YHLFKVDKFDFLVCMSA) are extracellular. The chain crosses the membrane as a helical span at residues 459 to 479 (FFGVSFLSMDYGLIISVGFSI). Over 480-634 (VRALLYVARP…FNLTTTKPEV (155 aa)) the chain is Cytoplasmic. The STAS domain maps to 508-623 (QYPASEEMLG…LSIDDAVQAC (116 aa)).

The protein belongs to the SLC26A/SulP transporter (TC 2.A.53) family.

It is found in the membrane. Functionally, h(+)/sulfate cotransporter that may play a role in the regulation of sulfate assimilation. This is Probable sulfate transporter 3.5 (SULTR3;5) from Arabidopsis thaliana (Mouse-ear cress).